The sequence spans 298 residues: Multifunctional dioxygenase ausE (298 aa).

The substrate site is built by R72 and Q127. The Fe cation site is built by H130 and D132. T167 contacts substrate. H214 contacts Fe cation. R226 contacts substrate.

This sequence belongs to the PhyH family. Homodimer. The cofactor is Fe cation.

It catalyses the reaction preaustinoid A1 + 2-oxoglutarate + O2 = preaustinoid A2 + succinate + CO2 + H2O. The enzyme catalyses preaustinoid A2 + 2-oxoglutarate + O2 = preaustinoid A3 + succinate + CO2 + H2O. It carries out the reaction berkeleyone A + 2-oxoglutarate + O2 = preaustinoid A + succinate + CO2 + H2O. It participates in secondary metabolite biosynthesis; terpenoid biosynthesis. Functionally, multifunctional dioxygenase; part of the gene cluster that mediates the biosynthesis of calidodehydroaustin, a fungal meroterpenoid. The first step of the pathway is the synthesis of 3,5-dimethylorsellinic acid by the polyketide synthase ausA. 3,5-dimethylorsellinic acid is then prenylated by the polyprenyl transferase ausN. Further epoxidation by the FAD-dependent monooxygenase ausM and cyclization by the probable terpene cyclase ausL lead to the formation of protoaustinoid A. Protoaustinoid A is then oxidized to spiro-lactone preaustinoid A3 by the combined action of the FAD-binding monooxygenases ausB and ausC, and the dioxygenase ausE. Acid-catalyzed keto-rearrangement and ring contraction of the tetraketide portion of preaustinoid A3 by ausJ lead to the formation of preaustinoid A4. The aldo-keto reductase ausK, with the help of ausH, is involved in the next step by transforming preaustinoid A4 into isoaustinone which is in turn hydroxylated by the P450 monooxygenase ausI to form austinolide. The cytochrome P450 monooxygenase ausG modifies austinolide to austinol. Austinol is further acetylated to austin by the O-acetyltransferase ausP, which spontaneously changes to dehydroaustin. The cytochrome P450 monooxygenase ausR then converts dehydroaustin is into 7-dehydrodehydroaustin. The hydroxylation catalyzed by ausR permits the O-acetyltransferase ausQ to add an additional acetyl group to the molecule, leading to the formation of acetoxydehydroaustin. The short chain dehydrogenase ausT catalyzes the reduction of the double bond present between carbon atoms 1 and 2 to convert 7-dehydrodehydroaustin into 1,2-dihydro-7-hydroxydehydroaustin. AusQ catalyzes not only an acetylation reaction but also the addition of the PKS ausV diketide product to 1,2-dihydro-7-hydroxydehydroaustin, forming precalidodehydroaustin. Finally, the iron/alpha-ketoglutarate-dependent dioxygenase converts precalidodehydroaustin into calidodehydroaustin. This Aspergillus calidoustus protein is Multifunctional dioxygenase ausE.